The sequence spans 703 residues: Polyribonucleotide nucleotidyltransferase (703 aa).

2 residues coordinate Mg(2+): Asp482 and Asp488. The KH domain occupies 549–607 (PKAQVMKIPEDKVGLVIGPAGKNIKYIKEQFGASVWIDGANAYINAPTIEAVNKAADFI). The S1 motif domain maps to 617–679 (GGVYEGKVIR…EQNRLNLCSP (63 aa)). Positions 677 to 703 (CSPDYQKPENQERPRKEQLNRKPHHRK) are disordered. A compositionally biased stretch (basic and acidic residues) spans 682–696 (QKPENQERPRKEQLN).

It belongs to the polyribonucleotide nucleotidyltransferase family. The cofactor is Mg(2+).

The protein localises to the cytoplasm. The enzyme catalyses RNA(n+1) + phosphate = RNA(n) + a ribonucleoside 5'-diphosphate. In terms of biological role, involved in mRNA degradation. Catalyzes the phosphorolysis of single-stranded polyribonucleotides processively in the 3'- to 5'-direction. This chain is Polyribonucleotide nucleotidyltransferase, found in Hydrogenobaculum sp. (strain Y04AAS1).